Consider the following 235-residue polypeptide: MVHIISKKTVSFIGQKLAAQIDEQLFTKYGFKVEQLMELAGLAAAQAIAAHYPKSNVAVLCGPGNNGGDGFVCARHLQQFGFTPSIVYPKESRNELMKSLVVQCETSSIPITATLPTNLQAFPLIVDALFGFSFHPPTREPFTEMLKTVRASGIHVFSIDVPSGWDVELGAPSGNDDDVIHPHSVISLTLPKLCMKNWTGPHFLGGRFVPKSLVDEHELLMPQYPGFEQIVKLED.

The YjeF N-terminal domain occupies 18–221 (AAQIDEQLFT…SLVDEHELLM (204 aa)). Position 65 to 69 (65 to 69 (NNGGD)) interacts with (6S)-NADPHX. 2 residues coordinate K(+): asparagine 66 and aspartate 127. (6S)-NADPHX contacts are provided by residues 131–137 (GFSFHPP) and aspartate 160. Residue serine 163 participates in K(+) binding.

It belongs to the NnrE/AIBP family. It depends on K(+) as a cofactor.

The catalysed reaction is (6R)-NADHX = (6S)-NADHX. It carries out the reaction (6R)-NADPHX = (6S)-NADPHX. Functionally, catalyzes the epimerization of the S- and R-forms of NAD(P)HX, a damaged form of NAD(P)H that is a result of enzymatic or heat-dependent hydration. This is a prerequisite for the S-specific NAD(P)H-hydrate dehydratase to allow the repair of both epimers of NAD(P)HX. This is NAD(P)H-hydrate epimerase from Caenorhabditis elegans.